Here is a 546-residue protein sequence, read N- to C-terminus: Chaperonin GroEL (546 aa).

ATP is bound by residues 30–33, K51, 87–91, G415, and D496; these read TLGP and DGTTT. A disordered region spans residues 526 to 546; that stretch reads PQKDAPAGGGMPDMGGMGGMM. Residues 532-546 show a composition bias toward gly residues; sequence AGGGMPDMGGMGGMM.

Belongs to the chaperonin (HSP60) family. Forms a cylinder of 14 subunits composed of two heptameric rings stacked back-to-back. Interacts with the co-chaperonin GroES.

It is found in the cytoplasm. The enzyme catalyses ATP + H2O + a folded polypeptide = ADP + phosphate + an unfolded polypeptide.. Its function is as follows. Together with its co-chaperonin GroES, plays an essential role in assisting protein folding. The GroEL-GroES system forms a nano-cage that allows encapsulation of the non-native substrate proteins and provides a physical environment optimized to promote and accelerate protein folding. The polypeptide is Chaperonin GroEL (Ruegeria pomeroyi (strain ATCC 700808 / DSM 15171 / DSS-3) (Silicibacter pomeroyi)).